A 309-amino-acid chain; its full sequence is Wall-associated proteinase (309 aa).

Residues Asn190 and Asn295 are each glycosylated (N-linked (GlcNAc...) asparagine).

It localises to the secreted. It is found in the cell wall. The protein localises to the membrane. Its function is as follows. May participate in wall plasticization and/or intussusception or in cell wall turnover. The polypeptide is Wall-associated proteinase (Coccidioides posadasii (strain RMSCC 757 / Silveira) (Valley fever fungus)).